We begin with the raw amino-acid sequence, 299 residues long: Serine/threonine-protein kinase 1 (299 aa).

In terms of domain architecture, Protein kinase spans 39–277 (IATKPMFEGG…FKGLVSHPWF (239 aa)). ATP is bound by residues 45-53 (FEGGRRNNV) and Lys66. The active-site Proton acceptor is the Asp153.

This sequence belongs to the protein kinase superfamily. Ser/Thr protein kinase family.

It localises to the virion. Its subcellular location is the host cytoplasm. The catalysed reaction is L-seryl-[protein] + ATP = O-phospho-L-seryl-[protein] + ADP + H(+). It catalyses the reaction L-threonyl-[protein] + ATP = O-phospho-L-threonyl-[protein] + ADP + H(+). In terms of biological role, essential for viral replication. It may mediate the virus progression through DNA replication. The polypeptide is Serine/threonine-protein kinase 1 (African swine fever virus (isolate Pig/Kenya/KEN-50/1950) (ASFV)).